We begin with the raw amino-acid sequence, 351 residues long: Keratocan (351 aa).

A signal peptide spans Met-1–Thr-20. In terms of domain architecture, LRRNT spans Asp-34–Ser-72. Disulfide bonds link Cys-43-Cys-49 and Cys-47-Cys-59. LRR repeat units lie at residues Arg-73–Asn-94, Gln-97–Leu-118, Lys-123–Arg-143, Ser-144–Asn-165, Asn-168–Asp-181, Asn-194–Ala-214, Asn-215–Val-236, Lys-239–Gly-259, Ser-264–Ala-283, and Asn-284–Pro-305. Asn-94 is a glycosylation site (N-linked (GlcNAc...) (keratan sulfate) asparagine). N-linked (GlcNAc...) (keratan sulfate) asparagine glycosylation occurs at Asn-168. Residue Asn-223 is glycosylated (N-linked (GlcNAc...) asparagine). A glycan (N-linked (GlcNAc...) asparagine) is linked at Asn-299. Cys-304 and Cys-342 form a disulfide bridge.

It belongs to the small leucine-rich proteoglycan (SLRP) family. SLRP class II subfamily. Binds keratan sulfate chains. As to expression, selectively expressed in cornea of adult where it is detected in keratocytes but not in scleral cells. In embryo, first detected in periocular mesenchymal cells migrating toward developing cornea on 13.5 dpc; expression gradually restricted to corneal stromal cells on 14.5 to 18.5 dpc. Detected in scleral cells of 15.5 dpc but not in 18.5 dpc embryos.

It localises to the secreted. Its subcellular location is the extracellular space. The protein resides in the extracellular matrix. May be important in developing and maintaining corneal transparency and for the structure of the stromal matrix. This Mus musculus (Mouse) protein is Keratocan (Kera).